A 454-amino-acid polypeptide reads, in one-letter code: Pup--protein ligase (454 aa).

Glu-9 provides a ligand contact to Mg(2+). Residue Arg-53 participates in ATP binding. Tyr-55 contributes to the Mg(2+) binding site. The active-site Proton acceptor is Asp-57. Glu-63 contributes to the Mg(2+) binding site. Residues Thr-66 and Trp-420 each coordinate ATP.

The protein belongs to the Pup ligase/Pup deamidase family. Pup-conjugating enzyme subfamily.

The catalysed reaction is ATP + [prokaryotic ubiquitin-like protein]-L-glutamate + [protein]-L-lysine = ADP + phosphate + N(6)-([prokaryotic ubiquitin-like protein]-gamma-L-glutamyl)-[protein]-L-lysine.. Its pathway is protein degradation; proteasomal Pup-dependent pathway. It functions in the pathway protein modification; protein pupylation. Functionally, catalyzes the covalent attachment of the prokaryotic ubiquitin-like protein modifier Pup to the proteasomal substrate proteins, thereby targeting them for proteasomal degradation. This tagging system is termed pupylation. The ligation reaction involves the side-chain carboxylate of the C-terminal glutamate of Pup and the side-chain amino group of a substrate lysine. In Arthrobacter sp. (strain FB24), this protein is Pup--protein ligase.